The sequence spans 119 residues: Autophagy-related protein 8B (119 aa).

Residue Gly-117 is the site of Phosphatidylethanolamine amidated glycine attachment. Positions 118–119 are cleaved as a propeptide — removed in mature form; it reads LL.

It belongs to the ATG8 family. Interacts with ATG4. The C-terminal 2 residues are removed by ATG4 to expose Gly-117 at the C-terminus. The C-terminal Gly is then amidated with phosphatidylethanolamine by an activating system similar to that for ubiquitin.

It is found in the cytoplasmic vesicle. The protein resides in the autophagosome membrane. Its subcellular location is the vacuole membrane. It localises to the cytoplasm. The protein localises to the cytoskeleton. In terms of biological role, ubiquitin-like modifier involved in autophagosomes formation. May mediate the delivery of the autophagosomes to the vacuole via the microtubule cytoskeleton. The protein is Autophagy-related protein 8B (ATG8B) of Oryza sativa subsp. indica (Rice).